The following is a 94-amino-acid chain: DNA-binding protein HU (94 aa).

The disordered stretch occupies residues 56–94 (QKGKEGKVPGSDKTYKTEDKRVPKFKPGKTLKQKVEEGK). Basic and acidic residues predominate over residues 68–77 (KTYKTEDKRV). Over residues 78-87 (PKFKPGKTLK) the composition is skewed to basic residues.

The protein belongs to the bacterial histone-like protein family. In terms of assembly, homodimer.

In terms of biological role, histone-like DNA-binding protein which is capable of wrapping DNA to stabilize it, and thus to prevent its denaturation under extreme environmental conditions. This Helicobacter pylori (strain ATCC 700392 / 26695) (Campylobacter pylori) protein is DNA-binding protein HU (hup).